Reading from the N-terminus, the 492-residue chain is Uridine-cytidine kinase D (492 aa).

The tract at residues 36-56 (PLPKNKKDHDQSIESDSSFTR) is disordered. 117-124 (GPVGAGKT) lines the ATP pocket. The 171-residue stretch at 290 to 460 (EPVYVCKAKY…PQTFLYLYFK (171 aa)) folds into the CYTH domain. Positions 468 to 483 (PNYSKLKPNNTNSKIL) are enriched in low complexity. The interval 468–492 (PNYSKLKPNNTNSKILKNNKDKKNL) is disordered.

Belongs to the uridine kinase family.

The enzyme catalyses uridine + ATP = UMP + ADP + H(+). It carries out the reaction cytidine + ATP = CMP + ADP + H(+). It participates in pyrimidine metabolism; CTP biosynthesis via salvage pathway; CTP from cytidine: step 1/3. The protein operates within pyrimidine metabolism; UMP biosynthesis via salvage pathway; UMP from uridine: step 1/1. In terms of biological role, catalyzes the conversion of uridine into uridine monophosphate and cytidine into cytidine monophosphate in the pyrimidine salvage pathway. This chain is Uridine-cytidine kinase D (udkD), found in Dictyostelium discoideum (Social amoeba).